The following is a 285-amino-acid chain: Undecaprenyl-diphosphatase 2 (285 aa).

Transmembrane regions (helical) follow at residues 5 to 25 (MDLL…LLPV), 47 to 67 (MTFL…VYFW), 86 to 106 (WYVL…QSLI), 122 to 142 (LFSN…LIIL), 156 to 176 (LPSA…RGFS), 198 to 218 (FSFA…LVRL), 235 to 255 (SLLL…LLAL), and 265 to 285 (GRWY…LTLA).

This sequence belongs to the UppP family.

Its subcellular location is the cell inner membrane. It catalyses the reaction di-trans,octa-cis-undecaprenyl diphosphate + H2O = di-trans,octa-cis-undecaprenyl phosphate + phosphate + H(+). Functionally, catalyzes the dephosphorylation of undecaprenyl diphosphate (UPP). Confers resistance to bacitracin. This Acinetobacter baylyi (strain ATCC 33305 / BD413 / ADP1) protein is Undecaprenyl-diphosphatase 2.